We begin with the raw amino-acid sequence, 610 residues long: MSDVFDAKAFLKTVTSQPGVYRMYDAGGTVIYVGKAKDLKKRLSSYFRSNLASRKTEALVALIAQIDVTVTHTETEALLLEHNYIKLYQPRYNVLLRDDKSYPFIFLSGDTHPRLAMHRGAKHAKGEYFGPFPNGYAVRETLALLQKIFPVRQCENSVYRNRSRPCLQYQIGRCLGPCVAGLVSEEEYAQQVEYVRLFLAGKDDQVLTQLIARMEKASQSLEFEEAARIRDQIQAVRRVTEKQFVSNTGDDLDVIGVAFEAGMACVHVLFIRQGKVLGSRSYFPKVPGGTELGEVVETFVGQFYLQGSQMRTLPGEILLDFSLGDKTLLAESLSELAGRRINVQTKPRGDRARYLKLARTNAATALTTKLAQQSTIHQRLQALATVLELPAVKRMECFDISHTMGEQTVASCVVFDSNGPLRAEYRRYNITGITPGDDYAAMNQVLRRRYGKAIDENKIPDVILIDGGKGQLAQAKAVFAELDVPWDKHHPLLLGVAKGSDRKAGLETLFFEPEGEGFSLPPDSPALHVIQHIRDESHDHAISGHRKKRAKVKSTSSLETIEGVGPKRRQMLLKYMGGLQGLQQASVEEIAKVPGISHGLAEKIFYSLKH.

One can recognise a GIY-YIG domain in the interval 16-94; sequence SQPGVYRMYD…IKLYQPRYNV (79 aa). The UVR domain maps to 204–239; sequence DQVLTQLIARMEKASQSLEFEEAARIRDQIQAVRRV. Positions 540–559 are disordered; it reads HAISGHRKKRAKVKSTSSLE. The span at 543–552 shows a compositional bias: basic residues; the sequence is SGHRKKRAKV.

Belongs to the UvrC family. Interacts with UvrB in an incision complex.

It is found in the cytoplasm. The UvrABC repair system catalyzes the recognition and processing of DNA lesions. UvrC both incises the 5' and 3' sides of the lesion. The N-terminal half is responsible for the 3' incision and the C-terminal half is responsible for the 5' incision. The chain is UvrABC system protein C from Klebsiella pneumoniae (strain 342).